We begin with the raw amino-acid sequence, 273 residues long: Imidazole glycerol phosphate synthase subunit HisF (273 aa).

Active-site residues include Asp-12 and Asp-136.

Belongs to the HisA/HisF family. In terms of assembly, heterodimer of HisH and HisF.

Its subcellular location is the cytoplasm. The catalysed reaction is 5-[(5-phospho-1-deoxy-D-ribulos-1-ylimino)methylamino]-1-(5-phospho-beta-D-ribosyl)imidazole-4-carboxamide + L-glutamine = D-erythro-1-(imidazol-4-yl)glycerol 3-phosphate + 5-amino-1-(5-phospho-beta-D-ribosyl)imidazole-4-carboxamide + L-glutamate + H(+). It functions in the pathway amino-acid biosynthesis; L-histidine biosynthesis; L-histidine from 5-phospho-alpha-D-ribose 1-diphosphate: step 5/9. Its function is as follows. IGPS catalyzes the conversion of PRFAR and glutamine to IGP, AICAR and glutamate. The HisF subunit catalyzes the cyclization activity that produces IGP and AICAR from PRFAR using the ammonia provided by the HisH subunit. The chain is Imidazole glycerol phosphate synthase subunit HisF from Halobacterium salinarum (strain ATCC 29341 / DSM 671 / R1).